Here is a 37-residue protein sequence, read N- to C-terminus: Large ribosomal subunit protein bL36 (37 aa).

Belongs to the bacterial ribosomal protein bL36 family.

This is Large ribosomal subunit protein bL36 (rpmJ) from Oleidesulfovibrio alaskensis (strain ATCC BAA-1058 / DSM 17464 / G20) (Desulfovibrio alaskensis).